We begin with the raw amino-acid sequence, 213 residues long: Superoxide dismutase [Fe] (213 aa).

The Fe cation site is built by H26, H73, D156, and H160.

The protein belongs to the iron/manganese superoxide dismutase family. In terms of assembly, homodimer. Requires Fe cation as cofactor.

It catalyses the reaction 2 superoxide + 2 H(+) = H2O2 + O2. Its function is as follows. Destroys superoxide anion radicals which are normally produced within the cells and which are toxic to biological systems. This is Superoxide dismutase [Fe] (sodB) from Helicobacter pylori (strain ATCC 700392 / 26695) (Campylobacter pylori).